The primary structure comprises 223 residues: MPGLDGFGIRARLEEALLYLCTDARTERGDLAEFADAALDGGVDIIQLRDKSAGGAPLEARHELAALEVLAEACVRHGALLAVNDRADVAMAADADVLHLGQDDLPVELARRIVGDQVVVGRSTHDVVQADSAATEQGVDYFCTGPVWTTPTKPGREAAGLELVRHTAEHRGHGRPWFAIGGIGMDNIDEVVQAGARRVVVVRAITEAEDPRAAAAALRTKLG.

Residues 47–51 and asparagine 84 contribute to the 4-amino-2-methyl-5-(diphosphooxymethyl)pyrimidine site; that span reads QLRDK. Residues aspartate 85 and aspartate 104 each contribute to the Mg(2+) site. Serine 123 serves as a coordination point for 4-amino-2-methyl-5-(diphosphooxymethyl)pyrimidine. 150–152 serves as a coordination point for 2-[(2R,5Z)-2-carboxy-4-methylthiazol-5(2H)-ylidene]ethyl phosphate; it reads TPT. Lysine 153 is a 4-amino-2-methyl-5-(diphosphooxymethyl)pyrimidine binding site. Glycine 182 serves as a coordination point for 2-[(2R,5Z)-2-carboxy-4-methylthiazol-5(2H)-ylidene]ethyl phosphate.

Belongs to the thiamine-phosphate synthase family. Mg(2+) is required as a cofactor.

The catalysed reaction is 2-[(2R,5Z)-2-carboxy-4-methylthiazol-5(2H)-ylidene]ethyl phosphate + 4-amino-2-methyl-5-(diphosphooxymethyl)pyrimidine + 2 H(+) = thiamine phosphate + CO2 + diphosphate. The enzyme catalyses 2-(2-carboxy-4-methylthiazol-5-yl)ethyl phosphate + 4-amino-2-methyl-5-(diphosphooxymethyl)pyrimidine + 2 H(+) = thiamine phosphate + CO2 + diphosphate. It catalyses the reaction 4-methyl-5-(2-phosphooxyethyl)-thiazole + 4-amino-2-methyl-5-(diphosphooxymethyl)pyrimidine + H(+) = thiamine phosphate + diphosphate. Its pathway is cofactor biosynthesis; thiamine diphosphate biosynthesis; thiamine phosphate from 4-amino-2-methyl-5-diphosphomethylpyrimidine and 4-methyl-5-(2-phosphoethyl)-thiazole: step 1/1. Functionally, condenses 4-methyl-5-(beta-hydroxyethyl)thiazole monophosphate (THZ-P) and 2-methyl-4-amino-5-hydroxymethyl pyrimidine pyrophosphate (HMP-PP) to form thiamine monophosphate (TMP). In Saccharopolyspora erythraea (strain ATCC 11635 / DSM 40517 / JCM 4748 / NBRC 13426 / NCIMB 8594 / NRRL 2338), this protein is Thiamine-phosphate synthase.